Consider the following 334-residue polypeptide: Probable type II restriction enzyme HindVP (334 aa).

It carries out the reaction Endonucleolytic cleavage of DNA to give specific double-stranded fragments with terminal 5'-phosphates.. A P subtype restriction enzyme that recognizes the double-stranded sequence 5'-GRCGYC-3'; the cleavage site is unknown. The polypeptide is Probable type II restriction enzyme HindVP (hindVRP) (Haemophilus influenzae (strain ATCC 51907 / DSM 11121 / KW20 / Rd)).